We begin with the raw amino-acid sequence, 299 residues long: Nicotinate-nucleotide pyrophosphorylase [carboxylating] (299 aa).

The tract at residues 8 to 12 (HLLPP) is important for hexamer formation. Quinolinate contacts are provided by residues arginine 102, 138–139 (RK), 160–161 (HR), lysine 171, glutamate 201, aspartate 222, 248–250 (SGG), and glycine 270. Threonine 291 carries the post-translational modification Phosphothreonine.

The protein belongs to the NadC/ModD family. As to quaternary structure, hexamer formed by 3 homodimers.

It catalyses the reaction nicotinate beta-D-ribonucleotide + CO2 + diphosphate = quinolinate + 5-phospho-alpha-D-ribose 1-diphosphate + 2 H(+). Its pathway is cofactor biosynthesis; NAD(+) biosynthesis; nicotinate D-ribonucleotide from quinolinate: step 1/1. Involved in the catabolism of quinolinic acid (QA). This is Nicotinate-nucleotide pyrophosphorylase [carboxylating] (QPRT) from Bos taurus (Bovine).